The following is a 202-amino-acid chain: Recoverin (202 aa).

Gly-2 is lipidated: N-myristoyl glycine. EF-hand domains lie at 24–59 (TEEE…FFPE), 61–96 (DPKA…TSAG), 97–132 (KTNQ…IFKM), and 147–182 (TPEK…NKEI). Cys-39 carries the cysteine sulfenic acid (-SOH) modification. 10 residues coordinate Ca(2+): Asp-74, Asn-76, Asp-78, Thr-80, Glu-85, Asp-110, Asp-112, Asn-114, Thr-116, and Glu-121. The interval 189 to 192 (EPQK) is interaction with GRK1. Residues 191-202 (QKVKEKLKEKKL) form a modulates EF-hand 3 domain calcium binding affinity region.

The protein belongs to the recoverin family. As to quaternary structure, homodimer; disulfide-linked. Homodimerization is caused by prolonged intense illumination. May form a complex composed of RHO, GRK1 and RCVRN in a Ca(2+)-dependent manner; RCVRN prevents the interaction between GRK1 and RHO. Interacts (via C-terminus) with GRK1 (via N-terminus); the interaction is Ca(2+)-dependent. The N-terminal glycine is linked to one of four different types of acyl groups. The most abundant is myristoleate (14:1), but 14:0, 14:2, and 12:0 acyl residues are also present. The Ca(2+) induced exposure of the myristoyl group, known as the calcium-myristoyl switch, promotes RCVRN binding to the photoreceptor cell membranes only when intracellular Ca(2+) concentration is high. In terms of processing, oxidation on Cys-39 occurs in response to prolonged intense illumination and results in the formation of disulfide homodimers, and to a lesser extent disulfide-linked heterodimers. Expressed in the retina (at protein level). Expressed in the pineal gland (at protein level).

It localises to the photoreceptor inner segment. The protein resides in the cell projection. The protein localises to the cilium. It is found in the photoreceptor outer segment. Its subcellular location is the photoreceptor outer segment membrane. It localises to the perikaryon. Its function is as follows. Acts as a calcium sensor and regulates phototransduction of cone and rod photoreceptor cells. Modulates light sensitivity of cone photoreceptor in dark and dim conditions. In response to high Ca(2+) levels induced by low light levels, prolongs RHO/rhodopsin activation in rod photoreceptor cells by binding to and inhibiting GRK1-mediated phosphorylation of RHO/rhodopsin. Plays a role in scotopic vision/enhances vision in dim light by enhancing signal transfer between rod photoreceptors and rod bipolar cells. Improves rod photoreceptor sensitivity in dim light and mediates response of rod photoreceptors to facilitate detection of change and motion in bright light. This Bos taurus (Bovine) protein is Recoverin (RCVRN).